A 526-amino-acid polypeptide reads, in one-letter code: MTLDNYNIFGDEYLFSMPLSPLPKVLGTFDGIQSAPTLTTPTLTPTTLRSIEETFFEMTNDAPYQAGFKPPPLAPLVNNNNNNNNNGNGNGNGNGNQQQQQVFDCGASVMPGSDTEESNGSWADGQMNEDQSISDTSSGATDSTSYQNGHMMGNSGGGNGGGTGGANNFSNVLAAAGRNTNTSNSATPARRGGGRRPNRSANMTPEEEEKRRIRRERNKQAAARCRKRRVDQTNELTEEVELLEKRGENLKKEMELLNETKNQLEYFLQAHRPTCQKVRADMLSVTTCNGLIGPPALLSAGSCGSGSSHHNNNSNSNDSSSGTITGLDATLNSTGRSNSPLDLKPVPIDEDLLLHIKDEPLDGALDSSSSLDQDGPPPHKRFALPNIATLMTPTGPAGSLQTPVSGTAPHGFGSFPTTISNISSIHNGPTLNSLNKMPKERPNTLAFQRPFGGQMQLSVSGRAPTQIQGVPIQTPSTGTFNFDSLMDGGTGLTPVSGPLIPNCTSQNKHPLELPTPTTEPSKLVSL.

Disordered stretches follow at residues 71–165 and 178–221; these read PPLA…GTGG and RNTN…NKQA. Low complexity-rich tracts occupy residues 78–87 and 133–153; these read NNNNNNNNNG and ISDT…HMMG. The segment covering 154–165 has biased composition (gly residues); the sequence is NSGGGNGGGTGG. The span at 178–187 shows a compositional bias: polar residues; the sequence is RNTNTSNSAT. One can recognise a bZIP domain in the interval 208 to 271; that stretch reads EEKRRIRRER…NQLEYFLQAH (64 aa). The basic motif stretch occupies residues 210-229; sequence KRRIRRERNKQAAARCRKRR. Residues 236-264 form a leucine-zipper region; the sequence is LTEEVELLEKRGENLKKEMELLNETKNQL. Low complexity predominate over residues 301-322; that stretch reads GSCGSGSSHHNNNSNSNDSSSG. 2 disordered regions span residues 301-345 and 504-526; these read GSCG…DLKP and TSQN…LVSL. A compositionally biased stretch (polar residues) spans 330 to 340; sequence TLNSTGRSNSP. The residue at position 339 (serine 339) is a Phosphoserine.

This sequence belongs to the bZIP family. Fos subfamily. In terms of assembly, homodimer. Heterodimer with Jra. The kay-Jra heterodimer binds more stably to the AP-1 site than either of the two proteins alone.

Its subcellular location is the nucleus. Functionally, developmentally regulated transcription factor AP-1 binds and recognizes the enhancer DNA sequence: 5'-TGA[CG]TCA-3'. May play a role in the function or determination of a particular subset of cells in the developing embryo. It is able to carry out its function either independently of or in conjunction with Jra. This chain is Transcription factor kayak, found in Drosophila persimilis (Fruit fly).